The chain runs to 754 residues: MNEDLPKEYFELIRKALNEKEAEKAPLSRRRRVRRKNQPLPDAKKKFKTGLNELPRESVVTVNLDSSDDGVVTVPTDDSVEEIQSSEEDYDSEEFEDVTDGNEVAGVEDISVEIKPSSKRNSDARRTSRNVCSNEERKRRKYFHMLYLVCLMVHGFIRNEWINSKRLSRKLSNLVPEKVFELLHPQKDEELPLRSTRKLLDGLKKCMELWQKHWKITKKYDNVGLYMRTWKEIEMSANNKRKFKTLKRSDFLRAVSKGHGDPDISVQGFVAMLRACNVNARLIMSCQPPDFTNMKIDTSLNGNNAYKDMVKYPIFWCEVWDKFSKKWITVDPVNLKTIEQVRLHSKLAPKGVACCERNMLRYVIAYDRKYGCRDVTRRYAQWMNSKVRKRRITKDDFGEKWFRKVITALHHRKRTKIDDYEDQYFFQRDESEGIPDSVQDLKNHPYYVLEQDIKQTQIVKPGCKECGYLKVHGKVGKVLKVYAKRDIADLKSARQWYMNGRILKTGSRCKKVIKRTVGRPKGEAEEEDERLYSFEDTELYIPPLASASGEITKNTFGNIEVFAPTMIPGNCCLVENPVAIKAARFLGVEFAPAVTSFKFERGSTVKPVLSGIVVAKWLREAIETAIDGIEFIQEDDNRKEHLLGALESWNTLLLKLRIRSKLNSTYGKIAEEEPNVTKEQNIADNHDNTETFMGGGFLPGIANHEARPYSEPSEPEDSLDYVSVDKAEESATDDDVGEDYSDFMKELEMSEESD.

Residues 23 to 51 (EKAPLSRRRRVRRKNQPLPDAKKKFKTGL) are disordered. Basic residues predominate over residues 27–37 (LSRRRRVRRKN). A DNA-binding region spans residues 250–269 (DFLRAVSKGHGDPDISVQGF). A disordered region spans residues 701–754 (IANHEARPYSEPSEPEDSLDYVSVDKAEESATDDDVGEDYSDFMKELEMSEESD). A compositionally biased stretch (acidic residues) spans 730-741 (SATDDDVGEDYS).

This sequence belongs to the XPC family.

The protein resides in the cytoplasm. It is found in the nucleus. Involved in nucleotide excision repair of DNA damaged with UV light, bulky adducts, or cross-linking agents. The sequence is that of DNA repair protein RAD4 (RAD4) from Saccharomyces cerevisiae (strain ATCC 204508 / S288c) (Baker's yeast).